Reading from the N-terminus, the 299-residue chain is GTPase Era (299 aa).

An Era-type G domain is found at 5–172 (KSGFVSIIGR…IDVLKSFLPE (168 aa)). The tract at residues 13–20 (GRPNVGKS) is G1. 13-20 (GRPNVGKS) provides a ligand contact to GTP. Residues 39–43 (QTTRN) form a G2 region. The segment at 60-63 (DTPG) is G3. Residues 60–64 (DTPGI) and 122–125 (NKID) contribute to the GTP site. The G4 stretch occupies residues 122–125 (NKID). Residues 151 to 153 (ISA) are G5. The KH type-2 domain maps to 203–280 (TSEEIPHAIG…YLELWVKVQR (78 aa)).

Belongs to the TRAFAC class TrmE-Era-EngA-EngB-Septin-like GTPase superfamily. Era GTPase family. Monomer.

Its subcellular location is the cytoplasm. The protein localises to the cell membrane. Its function is as follows. An essential GTPase that binds both GDP and GTP, with rapid nucleotide exchange. Plays a role in 16S rRNA processing and 30S ribosomal subunit biogenesis and possibly also in cell cycle regulation and energy metabolism. The polypeptide is GTPase Era (Staphylococcus epidermidis (strain ATCC 12228 / FDA PCI 1200)).